The sequence spans 131 residues: Capsid protein (131 aa).

Residues Gln-2 and Tyr-131 each contribute to the Ca(2+) site.

This sequence belongs to the Leviviricetes capsid protein family. Homodimer. The capsid proteins form dimers that assemble by group of 5. Twelve such pentamers are linked together with free dimers. The homodimers binds to the viral RNA via an operator hairpin, but also to many other RNA sequences in the viral genome; this interaction probably shifts the virus from the replicative to the assembly phase and ensures specific encapsidation of the viral genome.

Its subcellular location is the virion. Capsid protein self-assembles to form an icosahedral capsid with a T=3 symmetry, about 26 nm in diameter, and consisting of 89 capsid proteins dimers (178 capsid proteins). Involved in viral genome encapsidation through the interaction between a capsid protein dimer and the multiple packaging signals present in the RNA genome. The capsid also contains 1 copy of the A2 maturation protein. Its function is as follows. Acts as a translational repressor of viral replicase synthesis late in infection. This latter function is the result of capsid protein interaction with an RNA hairpin which contains the replicase ribosome-binding site. The polypeptide is Capsid protein (Pseudomonas phage PRR1 (Bacteriophage PRR1)).